Here is a 718-residue protein sequence, read N- to C-terminus: Ribosomal RNA large subunit methyltransferase K/L (718 aa).

The THUMP domain maps to 44–155; that stretch reads DAYKVCIYSY…KQFVNVFLCL (112 aa).

Belongs to the methyltransferase superfamily. RlmKL family.

The protein resides in the cytoplasm. It carries out the reaction guanosine(2445) in 23S rRNA + S-adenosyl-L-methionine = N(2)-methylguanosine(2445) in 23S rRNA + S-adenosyl-L-homocysteine + H(+). It catalyses the reaction guanosine(2069) in 23S rRNA + S-adenosyl-L-methionine = N(2)-methylguanosine(2069) in 23S rRNA + S-adenosyl-L-homocysteine + H(+). In terms of biological role, specifically methylates the guanine in position 2445 (m2G2445) and the guanine in position 2069 (m7G2069) of 23S rRNA. The polypeptide is Ribosomal RNA large subunit methyltransferase K/L (Francisella tularensis subsp. novicida (strain U112)).